Reading from the N-terminus, the 214-residue chain is Phosphoribosylglycinamide formyltransferase (214 aa).

12-14 (GSN) is a binding site for N(1)-(5-phospho-beta-D-ribosyl)glycinamide. Residues 105-108 (LLIL) and asparagine 123 each bind (6R)-10-formyltetrahydrofolate. The active-site Proton donor is the histidine 125. Aspartate 167 serves as a coordination point for (6R)-10-formyltetrahydrofolate. Glutamate 197 is a N(1)-(5-phospho-beta-D-ribosyl)glycinamide binding site.

The protein belongs to the GART family.

The catalysed reaction is N(1)-(5-phospho-beta-D-ribosyl)glycinamide + (6R)-10-formyltetrahydrofolate = N(2)-formyl-N(1)-(5-phospho-beta-D-ribosyl)glycinamide + (6S)-5,6,7,8-tetrahydrofolate + H(+). The protein operates within purine metabolism; IMP biosynthesis via de novo pathway; N(2)-formyl-N(1)-(5-phospho-D-ribosyl)glycinamide from N(1)-(5-phospho-D-ribosyl)glycinamide (10-formyl THF route): step 1/1. In Saccharomyces cerevisiae (strain ATCC 204508 / S288c) (Baker's yeast), this protein is Phosphoribosylglycinamide formyltransferase.